Consider the following 285-residue polypeptide: 2-dehydro-3-deoxyphosphooctonate aldolase (285 aa).

It belongs to the KdsA family.

Its subcellular location is the cytoplasm. The catalysed reaction is D-arabinose 5-phosphate + phosphoenolpyruvate + H2O = 3-deoxy-alpha-D-manno-2-octulosonate-8-phosphate + phosphate. It participates in carbohydrate biosynthesis; 3-deoxy-D-manno-octulosonate biosynthesis; 3-deoxy-D-manno-octulosonate from D-ribulose 5-phosphate: step 2/3. The protein operates within bacterial outer membrane biogenesis; lipopolysaccharide biosynthesis. The sequence is that of 2-dehydro-3-deoxyphosphooctonate aldolase from Leptothrix cholodnii (strain ATCC 51168 / LMG 8142 / SP-6) (Leptothrix discophora (strain SP-6)).